The sequence spans 163 residues: Olfactory marker protein (163 aa).

Ala-2 carries the N-acetylalanine modification.

The protein belongs to the olfactory marker protein family. As to quaternary structure, interacts with BEX1 and BEX2. Uniquely associated with mature olfactory receptor neurons.

Its subcellular location is the cytoplasm. May act as a modulator of the olfactory signal-transduction cascade. The polypeptide is Olfactory marker protein (Omp) (Rattus norvegicus (Rat)).